Consider the following 427-residue polypeptide: Glutamyl-tRNA reductase (427 aa).

Residues 50 to 53, Ser110, 115 to 117, and Gln121 each bind substrate; these read TCNR and ETQ. Cys51 functions as the Nucleophile in the catalytic mechanism. NADP(+) is bound at residue 190–195; it reads GAGEMG.

The protein belongs to the glutamyl-tRNA reductase family. In terms of assembly, homodimer.

It carries out the reaction (S)-4-amino-5-oxopentanoate + tRNA(Glu) + NADP(+) = L-glutamyl-tRNA(Glu) + NADPH + H(+). The protein operates within porphyrin-containing compound metabolism; protoporphyrin-IX biosynthesis; 5-aminolevulinate from L-glutamyl-tRNA(Glu): step 1/2. Its function is as follows. Catalyzes the NADPH-dependent reduction of glutamyl-tRNA(Glu) to glutamate 1-semialdehyde (GSA). The sequence is that of Glutamyl-tRNA reductase from Campylobacter concisus (strain 13826).